A 494-amino-acid chain; its full sequence is Potassium voltage-gated channel subfamily A member 2 (494 aa).

The segment at 1–25 (MTVATGDPSDEAAAHPGNPAEYDPD) is disordered. The segment at 1–124 (MTVATGDPSD…YELGDEAIEL (124 aa)) is tetramerization domain. The Cytoplasmic portion of the chain corresponds to 1–159 (MTVATGDPSD…LLFEYPESSG (159 aa)). Residues 160–181 (PARIIAIISVMVILISIVSFCL) traverse the membrane as a helical segment. At 182–216 (ETLPIFRNDDDEPHSVFDTNTNTTIYFTSTYFTDP) the chain is on the extracellular side. N-linked (GlcNAc...) asparagine glycosylation occurs at N203. A helical membrane pass occupies residues 217–238 (FFILETLCIIWFSFEFLVRLFA). The S-palmitoyl cysteine moiety is linked to residue C239. The Cytoplasmic segment spans residues 239-249 (CPSKSGFFGNV). A helical transmembrane segment spans residues 250-270 (MNIIDVVAIIPYFITLATELA). The Extracellular segment spans residues 271-284 (EKPEDGQAGQQAMS). The chain crosses the membrane as a helical; Voltage-sensor span at residues 285-305 (LAILRVIRLVRVFRIFKLSRH). Residues 306 to 320 (SKGLQILGQTLKASM) are Cytoplasmic-facing. Residues 307–320 (KGLQILGQTLKASM) are S4-S5 linker. The chain crosses the membrane as a helical span at residues 321-342 (RELGLLIFFLFIGVILFSSAVY). The Extracellular portion of the chain corresponds to 343-356 (FAEADEPESQFESI). The helical intramembrane region spans 357–368 (PDAFWWAVVSMT). The Selectivity filter signature appears at 369-374 (TVGYGD). The stretch at 369-376 (TVGYGDMV) is an intramembrane region. Residues 377–383 (PTTIGGK) are Extracellular-facing. Residues 384-412 (IVGSLCAIAGVLTIALPVPVIVSNFNYFY) form a helical membrane-spanning segment. At 413-494 (HRETEGEEQA…VNITKMLTDV (82 aa)) the chain is on the cytoplasmic side. The PDZ-binding motif lies at 492-494 (TDV).

It belongs to the potassium channel family. A (Shaker) (TC 1.A.1.2) subfamily. Kv1.2/KCNA2 sub-subfamily. Homotetramer and heterotetramer with other family members. In terms of tissue distribution, expressed in oligodendrocytes.

It is found in the cell membrane. The enzyme catalyses K(+)(in) = K(+)(out). Functionally, voltage-gated potassium channel that mediates transmembrane potassium transport in excitable membranes, primarily in the brain and central nervous system. Prevents aberrant action potential firing and regulates neuronal output. Forms tetrameric potassium-selective channels through which potassium ions pass in accordance with their electrochemical gradient. The channel alternates between opened and closed conformations in response to the voltage difference across the membrane. Can form functional homotetrameric channels and heterotetrameric channels with other family members; the channels characteristics depend critically on the types of channel-forming alpha subunits that are present. Channel properties are modulated by cytoplasmic beta subunits that regulate the subcellular location of the alpha subunits. In vivo, membranes probably contain a mixture of heteromeric potassium channel complexes, making it difficult to assign currents observed in intact tissues to any particular potassium channel family member. Homotetrameric KCNA2 forms a delayed-rectifier potassium channel that opens in response to membrane depolarization, followed by slow spontaneous channel closure. Regulates neuronal excitability and plays a role as pacemaker in the regulation of neuronal action potentials. KCNA2-containing channels play a presynaptic role and prevent hyperexcitability and aberrant action potential firing. Response to toxins that are selective for KCNA2-containing potassium channels suggests that in Purkinje cells, dendritic subthreshold KCNA2-containing potassium channels prevent random spontaneous calcium spikes, suppressing dendritic hyperexcitability without hindering the generation of somatic action potentials, and thereby play an important role in motor coordination. Plays a role in the induction of long-term potentiation of neuron excitability in the CA3 layer of the hippocampus. This Oncorhynchus mykiss (Rainbow trout) protein is Potassium voltage-gated channel subfamily A member 2 (kcna2).